The chain runs to 294 residues: Protease HtpX (294 aa).

A run of 2 helical transmembrane segments spans residues 4–24 and 33–53; these read ILLF…ILFI and FGLI…SLLL. His139 lines the Zn(2+) pocket. The active site involves Glu140. His143 contributes to the Zn(2+) binding site. Transmembrane regions (helical) follow at residues 147–167 and 197–217; these read GDMI…IFLS and FFIS…ITFW. Glu223 provides a ligand contact to Zn(2+).

This sequence belongs to the peptidase M48B family. Requires Zn(2+) as cofactor.

The protein resides in the cell membrane. The polypeptide is Protease HtpX (Wigglesworthia glossinidia brevipalpis).